Consider the following 322-residue polypeptide: Ferredoxin--NADP reductase (322 aa).

FAD-binding residues include Asp34, Gln42, Tyr47, Val87, Phe120, Asp279, and Thr320.

This sequence belongs to the ferredoxin--NADP reductase type 2 family. In terms of assembly, homodimer. Requires FAD as cofactor.

The catalysed reaction is 2 reduced [2Fe-2S]-[ferredoxin] + NADP(+) + H(+) = 2 oxidized [2Fe-2S]-[ferredoxin] + NADPH. In Streptococcus pneumoniae serotype 2 (strain D39 / NCTC 7466), this protein is Ferredoxin--NADP reductase.